The primary structure comprises 512 residues: Cytochrome P450 76C1 (512 aa).

Residues 3–23 (IISGQALLLLFCFILSCFLIF) form a helical membrane-spanning segment. C450 contacts heme.

It belongs to the cytochrome P450 family. The cofactor is heme.

It localises to the membrane. This Arabidopsis thaliana (Mouse-ear cress) protein is Cytochrome P450 76C1 (CYP76C1).